The primary structure comprises 106 residues: Large ribosomal subunit protein eL42 (106 aa).

Belongs to the eukaryotic ribosomal protein eL42 family. Component of the large ribosomal subunit.

It localises to the cytoplasm. In terms of biological role, component of the large ribosomal subunit. The ribosome is a large ribonucleoprotein complex responsible for the synthesis of proteins in the cell. This chain is Large ribosomal subunit protein eL42 (RPL36A), found in Papio anubis (Olive baboon).